The chain runs to 859 residues: Photoactivated adenylate cyclase subunit beta-like protein FB (859 aa).

Residues 56–149 (LRRLMYLSKS…GRMYGDWHMK (94 aa)) enclose the BLUF 1 domain. Residues 205–333 (VVTFIYLVEF…DCINTTSRIA (129 aa)) form the Guanylate cyclase 1 domain. Residues 414-449 (GLPNSQRPPIFDDTPKANRRPRTPGYGGRQRSDSQV) form a disordered region. The 93-residue stretch at 471 to 563 (LTTLTYISQA…RVYPSEWTLT (93 aa)) folds into the BLUF 2 domain. A Guanylate cyclase 2 domain is found at 619-748 (VMLATDICSF…AVSARVMEVE (130 aa)). The disordered stretch occupies residues 813–859 (AARSGEKPLTEPEAAKPDFRVSPGRVRHGDSGRRSNSAQGKRSIQVR). The segment covering 815 to 831 (RSGEKPLTEPEAAKPDF) has biased composition (basic and acidic residues). Residues 846–859 (RSNSAQGKRSIQVR) are compositionally biased toward polar residues.

Belongs to the adenylyl cyclase class-4/guanylyl cyclase family. In terms of assembly, heterotetramer of two alpha and two beta subunits.

It localises to the cell projection. The protein localises to the cilium. The protein resides in the flagellum. The protein is Photoactivated adenylate cyclase subunit beta-like protein FB of Euglena gracilis.